The sequence spans 299 residues: Oxygen-dependent coproporphyrinogen-III oxidase (299 aa).

Ser-92 lines the substrate pocket. Positions 96 and 106 each coordinate a divalent metal cation. His-106 acts as the Proton donor in catalysis. Substrate is bound at residue 108-110 (NVR). Positions 145 and 175 each coordinate a divalent metal cation. Residues 240-275 (YVEFNLVWDRGTLFGLQTGGRTESILMSMPPLVRWE) are important for dimerization. Residue 258–260 (GGR) participates in substrate binding.

The protein belongs to the aerobic coproporphyrinogen-III oxidase family. In terms of assembly, homodimer. Requires a divalent metal cation as cofactor.

The protein resides in the cytoplasm. The enzyme catalyses coproporphyrinogen III + O2 + 2 H(+) = protoporphyrinogen IX + 2 CO2 + 2 H2O. The protein operates within porphyrin-containing compound metabolism; protoporphyrin-IX biosynthesis; protoporphyrinogen-IX from coproporphyrinogen-III (O2 route): step 1/1. Involved in the heme biosynthesis. Catalyzes the aerobic oxidative decarboxylation of propionate groups of rings A and B of coproporphyrinogen-III to yield the vinyl groups in protoporphyrinogen-IX. This is Oxygen-dependent coproporphyrinogen-III oxidase from Enterobacter sp. (strain 638).